The chain runs to 549 residues: Glucose-6-phosphate isomerase (549 aa).

Glu-355 serves as the catalytic Proton donor. Catalysis depends on residues His-387 and Lys-515.

It belongs to the GPI family.

The protein localises to the cytoplasm. It carries out the reaction alpha-D-glucose 6-phosphate = beta-D-fructose 6-phosphate. It functions in the pathway carbohydrate biosynthesis; gluconeogenesis. Its pathway is carbohydrate degradation; glycolysis; D-glyceraldehyde 3-phosphate and glycerone phosphate from D-glucose: step 2/4. Functionally, catalyzes the reversible isomerization of glucose-6-phosphate to fructose-6-phosphate. This is Glucose-6-phosphate isomerase from Histophilus somni (strain 2336) (Haemophilus somnus).